Consider the following 470-residue polypeptide: V-type ATP synthase beta chain (470 aa).

It belongs to the ATPase alpha/beta chains family.

In terms of biological role, produces ATP from ADP in the presence of a proton gradient across the membrane. The V-type beta chain is a regulatory subunit. The sequence is that of V-type ATP synthase beta chain from Deinococcus geothermalis (strain DSM 11300 / CIP 105573 / AG-3a).